The primary structure comprises 332 residues: Glyceraldehyde-3-phosphate dehydrogenase (332 aa).

NAD(+)-binding positions include 12-13, Asp-34, Lys-78, and Thr-120; that span reads RI. Residues 149 to 151, Thr-180, 209 to 210, and Arg-232 each bind D-glyceraldehyde 3-phosphate; these read SCT and TG. The active-site Nucleophile is the Cys-150. Asn-314 contacts NAD(+).

The protein belongs to the glyceraldehyde-3-phosphate dehydrogenase family. In terms of assembly, homotetramer.

The protein localises to the cytoplasm. The enzyme catalyses D-glyceraldehyde 3-phosphate + phosphate + NAD(+) = (2R)-3-phospho-glyceroyl phosphate + NADH + H(+). The protein operates within carbohydrate degradation; glycolysis; pyruvate from D-glyceraldehyde 3-phosphate: step 1/5. Its function is as follows. Catalyzes the oxidative phosphorylation of glyceraldehyde 3-phosphate (G3P) to 1,3-bisphosphoglycerate (BPG) using the cofactor NAD. The first reaction step involves the formation of a hemiacetal intermediate between G3P and a cysteine residue, and this hemiacetal intermediate is then oxidized to a thioester, with concomitant reduction of NAD to NADH. The reduced NADH is then exchanged with the second NAD, and the thioester is attacked by a nucleophilic inorganic phosphate to produce BPG. The sequence is that of Glyceraldehyde-3-phosphate dehydrogenase (gapA) from Buchnera aphidicola subsp. Schizaphis graminum (strain Sg).